A 227-amino-acid polypeptide reads, in one-letter code: Isopentenyl-diphosphate Delta-isomerase 1 (227 aa).

Lys36 lines the substrate pocket. His40 and His51 together coordinate Mg(2+). A Nudix hydrolase domain is found at Leu49 to Ile199. The substrate site is built by Arg70 and Lys74. Cys86 is an active-site residue. Substrate is bound at residue Ser87. Positions 146 and 148 each coordinate Mg(2+). Residue Glu148 is part of the active site. The residue at position 176 (Lys176) is an N6-acetyllysine. The short motif at Tyr225 to Ile227 is the Microbody targeting signal element.

Belongs to the IPP isomerase type 1 family. In terms of assembly, monomer. Mg(2+) serves as cofactor.

Its subcellular location is the peroxisome. It carries out the reaction isopentenyl diphosphate = dimethylallyl diphosphate. It participates in isoprenoid biosynthesis; dimethylallyl diphosphate biosynthesis; dimethylallyl diphosphate from isopentenyl diphosphate: step 1/1. Its function is as follows. Catalyzes the 1,3-allylic rearrangement of the homoallylic substrate isopentenyl (IPP) to its highly electrophilic allylic isomer, dimethylallyl diphosphate (DMAPP). The sequence is that of Isopentenyl-diphosphate Delta-isomerase 1 (IDI1) from Pongo abelii (Sumatran orangutan).